Here is a 335-residue protein sequence, read N- to C-terminus: Pharynx and intestine in excess protein 1 (335 aa).

Lys-68 participates in a covalent cross-link: Glycyl lysine isopeptide (Lys-Gly) (interchain with G-Cter in SUMO). The C3H1-type 1 zinc-finger motif lies at 98–126 (EYKTRLCDAFRREGYCPYNDNCTYAHGQD). Positions 130 to 156 (VPRRRQEYYSRDPPRERRDSRSRRDDV) are enriched in basic and acidic residues. Residues 130–188 (VPRRRQEYYSRDPPRERRDSRSRRDDVDTTINRSSSSASKHHDENRRPSNNHGSSNRRQ) form a disordered region. Composition is skewed to polar residues over residues 158–167 (TTINRSSSSA) and 177–187 (PSNNHGSSNRR). Residues 184–211 (SNRRQICHNFERGNCRYGPRCRFIHVEQ) form a C3H1-type 2 zinc finger. Residues 288–291 (MAPT) form a required for inhibition of Ser-2 phosphorylation region.

As to quaternary structure, interacts with hda-1, let-418 and mep-1. Interacts (via C terminus) with cit-1.1 (via C terminus). Sumoylated in adult germ cells.

It localises to the nucleus. The protein resides in the cytoplasm. Its subcellular location is the cytoskeleton. It is found in the microtubule organizing center. The protein localises to the centrosome. It localises to the spindle. The protein resides in the cytoplasmic granule. Its function is as follows. Maternally provided pie-1 is required for germline cell fate determination. Functions as a repressor of RNA polymerase II-dependent gene expression in the developing germline. Required for expression of nos-2 in P4 germline blastomere cells. Inhibits the histone deacetylase activity of hda-1. Represses transcriptional activation of cdk-9 and cit-1.1, which are members of the P-TEFb complex. Acts redundantly with gei-17 to promote piRNA-mediated silencing and fertility in adult germline. Promotes the sumoylation of hda-1 in adult animals but not in embryos thereby regulating its interaction with mep-1. This chain is Pharynx and intestine in excess protein 1, found in Caenorhabditis elegans.